The chain runs to 263 residues: Glutamate/glutamine/aspartate/asparagine transport ATP-binding protein BztD (263 aa).

Residues 23 to 257 form the ABC transporter domain; it reads IQISQMNKWY…PQSERTKQFL (235 aa). Residue 55–62 coordinates ATP; the sequence is GPSGSGKS.

This sequence belongs to the ABC transporter superfamily. In terms of assembly, bztB and BztC form a heterodimer which can form a membrane complex with a homodimer of BztD.

Its subcellular location is the cell membrane. Part of a binding-protein-dependent transport system for glutamate, glutamine, aspartate, asparagine. Probably responsible for energy coupling to the transport system. This chain is Glutamate/glutamine/aspartate/asparagine transport ATP-binding protein BztD (bztD), found in Rhodobacter capsulatus (strain ATCC BAA-309 / NBRC 16581 / SB1003).